The chain runs to 188 residues: Protein GrpE (188 aa).

The span at 1–10 (MPDPTQNPNV) shows a compositional bias: polar residues. The segment at 1–35 (MPDPTQNPNVTPELEQHAAPEAAAEAAPESSADVM) is disordered. Residues 19–32 (APEAAAEAAPESSA) show a composition bias toward low complexity.

The protein belongs to the GrpE family. Homodimer.

Its subcellular location is the cytoplasm. Functionally, participates actively in the response to hyperosmotic and heat shock by preventing the aggregation of stress-denatured proteins, in association with DnaK and GrpE. It is the nucleotide exchange factor for DnaK and may function as a thermosensor. Unfolded proteins bind initially to DnaJ; upon interaction with the DnaJ-bound protein, DnaK hydrolyzes its bound ATP, resulting in the formation of a stable complex. GrpE releases ADP from DnaK; ATP binding to DnaK triggers the release of the substrate protein, thus completing the reaction cycle. Several rounds of ATP-dependent interactions between DnaJ, DnaK and GrpE are required for fully efficient folding. This Azoarcus sp. (strain BH72) protein is Protein GrpE.